Reading from the N-terminus, the 379-residue chain is Queuine tRNA-ribosyltransferase (379 aa).

Residue aspartate 94 is the Proton acceptor of the active site. Substrate contacts are provided by residues 94-98, aspartate 148, glutamine 191, and glycine 218; that span reads DSGGF. Positions 249-255 are RNA binding; the sequence is GVGSPDA. Aspartate 268 (nucleophile) is an active-site residue. Residues 273–277 are RNA binding; important for wobble base 34 recognition; the sequence is TRIAR. Zn(2+) is bound by residues cysteine 306, cysteine 308, cysteine 311, and histidine 337.

The protein belongs to the queuine tRNA-ribosyltransferase family. As to quaternary structure, homodimer. Within each dimer, one monomer is responsible for RNA recognition and catalysis, while the other monomer binds to the replacement base PreQ1. Zn(2+) serves as cofactor.

It catalyses the reaction 7-aminomethyl-7-carbaguanine + guanosine(34) in tRNA = 7-aminomethyl-7-carbaguanosine(34) in tRNA + guanine. It participates in tRNA modification; tRNA-queuosine biosynthesis. Catalyzes the base-exchange of a guanine (G) residue with the queuine precursor 7-aminomethyl-7-deazaguanine (PreQ1) at position 34 (anticodon wobble position) in tRNAs with GU(N) anticodons (tRNA-Asp, -Asn, -His and -Tyr). Catalysis occurs through a double-displacement mechanism. The nucleophile active site attacks the C1' of nucleotide 34 to detach the guanine base from the RNA, forming a covalent enzyme-RNA intermediate. The proton acceptor active site deprotonates the incoming PreQ1, allowing a nucleophilic attack on the C1' of the ribose to form the product. After dissociation, two additional enzymatic reactions on the tRNA convert PreQ1 to queuine (Q), resulting in the hypermodified nucleoside queuosine (7-(((4,5-cis-dihydroxy-2-cyclopenten-1-yl)amino)methyl)-7-deazaguanosine). This chain is Queuine tRNA-ribosyltransferase, found in Staphylococcus haemolyticus (strain JCSC1435).